Reading from the N-terminus, the 126-residue chain is Fatty acid-binding protein, liver (126 aa).

N-acetylalanine is present on Ala-2.

Belongs to the calycin superfamily. Fatty-acid binding protein (FABP) family.

The protein localises to the cytoplasm. Functionally, binds free fatty acids and their coenzyme A derivatives, bilirubin, and some other small molecules in the cytoplasm. May be involved in intracellular lipid transport. This is Fatty acid-binding protein, liver (fabp1) from Schroederichthys bivius (Narrowmouthed catshark).